The primary structure comprises 256 residues: uncharacterized protein (256 aa).

Transmembrane regions (helical) follow at residues 32-52 (ILAS…GSYF), 59-79 (FAFP…AYGG), 112-132 (YAGN…TGLF), 156-176 (LFFR…IPMS), 184-204 (LFTM…HSIA), 207-227 (CTFA…MGAV), and 230-250 (LIPV…WMYY).

This sequence belongs to the FNT transporter (TC 1.A.16) family.

Its subcellular location is the cell membrane. This is an uncharacterized protein from Bacillus subtilis (strain 168).